Here is a 363-residue protein sequence, read N- to C-terminus: 3-dehydroquinate synthase (363 aa).

Residues 134–135 (TT), K147, and K156 each bind NAD(+). 3 residues coordinate Zn(2+): E189, H254, and H271.

This sequence belongs to the sugar phosphate cyclases superfamily. Dehydroquinate synthase family. It depends on Co(2+) as a cofactor. Zn(2+) serves as cofactor. Requires NAD(+) as cofactor.

The protein localises to the cytoplasm. The enzyme catalyses 7-phospho-2-dehydro-3-deoxy-D-arabino-heptonate = 3-dehydroquinate + phosphate. The protein operates within metabolic intermediate biosynthesis; chorismate biosynthesis; chorismate from D-erythrose 4-phosphate and phosphoenolpyruvate: step 2/7. Its function is as follows. Catalyzes the conversion of 3-deoxy-D-arabino-heptulosonate 7-phosphate (DAHP) to dehydroquinate (DHQ). The protein is 3-dehydroquinate synthase of Prochlorococcus marinus (strain MIT 9312).